Consider the following 959-residue polypeptide: Isoleucine--tRNA ligase (959 aa).

The 'HIGH' region motif lies at 60–70 (PYANGSLHMGH). Glu-569 contacts L-isoleucyl-5'-AMP. The 'KMSKS' region motif lies at 610–614 (KMSKS). Lys-613 is an ATP binding site. The Zn(2+) site is built by Cys-928, Cys-931, Cys-948, and Cys-951.

This sequence belongs to the class-I aminoacyl-tRNA synthetase family. IleS type 1 subfamily. Monomer. Requires Zn(2+) as cofactor.

It is found in the cytoplasm. It catalyses the reaction tRNA(Ile) + L-isoleucine + ATP = L-isoleucyl-tRNA(Ile) + AMP + diphosphate. Functionally, catalyzes the attachment of isoleucine to tRNA(Ile). As IleRS can inadvertently accommodate and process structurally similar amino acids such as valine, to avoid such errors it has two additional distinct tRNA(Ile)-dependent editing activities. One activity is designated as 'pretransfer' editing and involves the hydrolysis of activated Val-AMP. The other activity is designated 'posttransfer' editing and involves deacylation of mischarged Val-tRNA(Ile). This Rippkaea orientalis (strain PCC 8801 / RF-1) (Cyanothece sp. (strain PCC 8801)) protein is Isoleucine--tRNA ligase.